The primary structure comprises 643 residues: Threonine--tRNA ligase (643 aa).

A TGS domain is found at 1 to 65 (MIHITLPDGS…NKDMPLSIVT (65 aa)). The interval 246–537 (DHRKLGRELD…LIEQHAGAMP (292 aa)) is catalytic. Zn(2+) is bound by residues Cys-337, His-388, and His-514.

Belongs to the class-II aminoacyl-tRNA synthetase family. Homodimer. The cofactor is Zn(2+).

It is found in the cytoplasm. The enzyme catalyses tRNA(Thr) + L-threonine + ATP = L-threonyl-tRNA(Thr) + AMP + diphosphate + H(+). Catalyzes the attachment of threonine to tRNA(Thr) in a two-step reaction: L-threonine is first activated by ATP to form Thr-AMP and then transferred to the acceptor end of tRNA(Thr). Also edits incorrectly charged L-seryl-tRNA(Thr). The sequence is that of Threonine--tRNA ligase from Delftia acidovorans (strain DSM 14801 / SPH-1).